Reading from the N-terminus, the 586-residue chain is Transcription elongation regulator 1-like protein (586 aa).

The tract at residues Met1 to Asp30 is disordered. Positions Phe7–Gln23 are enriched in basic residues. The WW 1 domain occupies Thr148–Glu181. Disordered stretches follow at residues Thr281–Pro344 and Asp378–Leu448. The span at Lys306 to Pro317 shows a compositional bias: basic and acidic residues. The 34-residue stretch at Pro339–Asp372 folds into the WW 2 domain. Composition is skewed to basic and acidic residues over residues Asp378 to Pro387, Asp411 to Thr421, and Lys428 to Thr439. FF domains are found at residues Leu450 to Thr503 and Lys515 to Ile570.

The protein is Transcription elongation regulator 1-like protein (TCERG1L) of Homo sapiens (Human).